A 489-amino-acid polypeptide reads, in one-letter code: MPIVNVKWQKEKYVVEVDTSAPPMVFKAQLFALTQVVPERQKVVIMGRTLGDDDWEGITIKENMTIMMMGSVGEIPKPPTVLEKKQANRDKQAEEISALYPCGLANLGNTCYFNSCVQMLKEVNELVLKPAEEMRIREHNDRLCHNLATLFNSLRDKDRALRSKGEPIKPFAAILTLSDSFPQFEKFKQQDANECLVSIMSNVTRIYGLSGWNIESLFRIQTETTMKCLESDEVSEKKVERNNQLTCYVNQDVRFLQTGIKAGFEEEMTRNSEELNRDAKWQKNTQISRLPKYLTVNINRFFYKESTKTNAKILKSVQFPMQLDTYDLCSQELKDKLVARRADIKLEEDAKLERELRKKVLDKEQGDKIFDDGVALPTAFEDDAGSNNSGFYDLKGIITHKGRSSQDGHYVAWMRSSEDGKWRLFDDEHVTVVDEEAILKTSGGGDWHSAYVLLYEARVIKQFPELPPAPVPTEVAADTAEPMEVSEKQ.

In terms of domain architecture, USP spans 102–458 (CGLANLGNTC…SAYVLLYEAR (357 aa)). Residue Cys111 is the Nucleophile of the active site. His409 acts as the Proton acceptor in catalysis. Positions 467–489 (PPAPVPTEVAADTAEPMEVSEKQ) are disordered.

This sequence belongs to the peptidase C19 family. USP14/UBP6 subfamily.

It carries out the reaction Thiol-dependent hydrolysis of ester, thioester, amide, peptide and isopeptide bonds formed by the C-terminal Gly of ubiquitin (a 76-residue protein attached to proteins as an intracellular targeting signal).. In terms of biological role, proteasome-associated deubiquitinase which releases ubiquitin from the proteasome targeted ubiquitinated proteins. Ensures the regeneration of ubiquitin at the proteasome. This chain is Ubiquitin carboxyl-terminal hydrolase 14 (usp-14), found in Caenorhabditis elegans.